The sequence spans 410 residues: Exopolygalacturonase (410 aa).

Positions 1-22 (MACIDNAMRALFLLALFCVVHG) are cleaved as a signal peptide. Asn89 and Asn201 each carry an N-linked (GlcNAc...) asparagine glycan. PbH1 repeat units lie at residues 192-218 (CKDMLIKDVNVTAPGDSPNTDGIHMGD), 219-240 (SSGVTITNTVIGVGDDCISIGP), 242-262 (TSKVNITGVTCGPGHGISIGS), 272-293 (VTDINVKDCTLKKTANGVRIKA), and 337-377 (ASKV…TMDD). The Proton donor role is filled by Asp233. Residues Cys235 and Cys252 are joined by a disulfide bond. Asn246 carries N-linked (GlcNAc...) asparagine glycosylation. The active site involves His256. An N-linked (GlcNAc...) asparagine glycan is attached at Asn349. Cys364 and Cys370 are oxidised to a cystine. N-linked (GlcNAc...) asparagine glycosylation is present at Asn387. Residues Cys393 and Cys409 are joined by a disulfide bond.

The protein belongs to the glycosyl hydrolase 28 family. As to expression, pollen.

It is found in the secreted. The protein localises to the cell wall. The catalysed reaction is [(1-&gt;4)-alpha-D-galacturonosyl](n) + H2O = alpha-D-galacturonate + [(1-&gt;4)-alpha-D-galacturonosyl](n-1). In terms of biological role, may function in depolymerizing pectin during pollen development, germination, and tube growth. Acts as an exo-polygalacturonase. The chain is Exopolygalacturonase (PG2C) from Zea mays (Maize).